The following is a 140-amino-acid chain: Putative esterase SSO2140 (140 aa).

It belongs to the thioesterase PaaI family.

The polypeptide is Putative esterase SSO2140 (Saccharolobus solfataricus (strain ATCC 35092 / DSM 1617 / JCM 11322 / P2) (Sulfolobus solfataricus)).